Consider the following 365-residue polypeptide: Saoe class I histocompatibility antigen, C alpha chain (365 aa).

The signal sequence occupies residues 1–24; the sequence is MTIMAPRTLLLLLSGALSVTETWA. The tract at residues 25-114 is alpha-1; it reads GSHSMRYFST…LLGYYNQSEA (90 aa). At 25 to 308 the chain is on the extracellular side; it reads GSHSMRYFST…EPPSQPTIPI (284 aa). N-linked (GlcNAc...) asparagine glycosylation is present at N110. An alpha-2 region spans residues 115-206; that stretch reads GFHTIQWMYG…ENGKEMLQRA (92 aa). 2 disulfide bridges follow: C125/C188 and C227/C283. Residues 207–298 are alpha-3; the sequence is EPPKTHVTHH…GLPEPFTLRW (92 aa). The 89-residue stretch at 209–297 folds into the Ig-like C1-type domain; that stretch reads PKTHVTHHPV…EGLPEPFTLR (89 aa). A connecting peptide region spans residues 299–308; it reads EPPSQPTIPI. Residues 309–332 form a helical membrane-spanning segment; sequence MGIVAILAILGAVVTGAVVAAVMW. Residues 333–365 lie on the Cytoplasmic side of the membrane; it reads RKKSSDKKGGSYSQAARSDSAQGSDVSLTACKV. The tract at residues 337-365 is disordered; the sequence is SDKKGGSYSQAARSDSAQGSDVSLTACKV. The span at 346–359 shows a compositional bias: polar residues; it reads QAARSDSAQGSDVS. S356 and S359 each carry phosphoserine.

The protein belongs to the MHC class I family. In terms of assembly, heterodimer of an alpha chain and a beta chain (beta-2-microglobulin).

It is found in the membrane. Its function is as follows. Involved in the presentation of foreign antigens to the immune system. This chain is Saoe class I histocompatibility antigen, C alpha chain, found in Saguinus oedipus (Cotton-top tamarin).